The primary structure comprises 121 residues: Large ribosomal subunit protein uL18 (121 aa).

It belongs to the universal ribosomal protein uL18 family. In terms of assembly, part of the 50S ribosomal subunit; part of the 5S rRNA/L5/L18/L25 subcomplex. Contacts the 5S and 23S rRNAs.

This is one of the proteins that bind and probably mediate the attachment of the 5S RNA into the large ribosomal subunit, where it forms part of the central protuberance. The sequence is that of Large ribosomal subunit protein uL18 from Caldanaerobacter subterraneus subsp. tengcongensis (strain DSM 15242 / JCM 11007 / NBRC 100824 / MB4) (Thermoanaerobacter tengcongensis).